A 540-amino-acid chain; its full sequence is MDSQRNILLIALALVSFLLFQQWQVAKNPAPQAVEQAQSSSSLPAPSFADELDPVPGQQQASAKTITVTTDVLTLSIDTVGGDVVHADLNQYSAELDSSDPFVLLKDTQGHQFIAQSGLVGPQGIDLSSSNRPHYNVSADSFTLADGQDELRVPMTFTANGIEYTKTYVLKRGSYALNVEYDVANNSGNNATFGMYAHLRQNLMDAGGSITMPTYRGGAYSTEDTRYKKYSFEDMQDRNLSINLADGQGWAAMIQHYFAAAWIPRNEPGTNLYTRVIGNLGDIGVRMPNKTIATGDQAKFEATLWVGPKLQQEMAAVAPNLDLVVDYGWLWFIAKPLHSLLAFIQSFVGNWGVAIICLTFIVRGAMYPLTKAQYTSMAKMRMLQPKLQAMRERIGDDRQRMSQEMMELYKKEKVNPLGGCLPLVLQMPIFIALYWALMESVELRHSPFFGWIHDLSAQDPYYILPLLMGASMFLIQKMSPTTVTDPMQQKIMTFMPVMFTFFFLFFPSGLVLYWLVSNIVTLIQQTLIYKALEKKGLHTK.

Residues asparagine 6–alanine 26 form a helical membrane-spanning segment. Over residues glutamine 36–serine 47 the composition is skewed to low complexity. A disordered region spans residues glutamine 36–alanine 63. The next 4 membrane-spanning stretches (helical) occupy residues alanine 342–valine 362, leucine 417–leucine 437, leucine 455–isoleucine 475, and proline 496–valine 516.

It belongs to the OXA1/ALB3/YidC family. Type 1 subfamily. In terms of assembly, interacts with the Sec translocase complex via SecD. Specifically interacts with transmembrane segments of nascent integral membrane proteins during membrane integration.

Its subcellular location is the cell inner membrane. Functionally, required for the insertion and/or proper folding and/or complex formation of integral membrane proteins into the membrane. Involved in integration of membrane proteins that insert both dependently and independently of the Sec translocase complex, as well as at least some lipoproteins. Aids folding of multispanning membrane proteins. The polypeptide is Membrane protein insertase YidC (Vibrio parahaemolyticus serotype O3:K6 (strain RIMD 2210633)).